The following is a 182-amino-acid chain: CDP-diacylglycerol--glycerol-3-phosphate 3-phosphatidyltransferase (182 aa).

The Cytoplasmic segment spans residues 2-12; sequence QFNIPTLLTLF. The helical transmembrane segment at 13–37 threads the bilayer; sequence RVALIPFFVLAFYLPFVWAPLLCAL. Residues 38 to 60 are Periplasmic-facing; the sequence is IFVFAAVTDWFDGFLARRWKQTT. The chain crosses the membrane as a helical span at residues 61-81; that stretch reads RFGAFLDPVADKVMVAVALVL. The Cytoplasmic portion of the chain corresponds to 82–86; sequence VAEYY. Residues 87-107 form a helical membrane-spanning segment; the sequence is HSWWITLPAATMIAREIIISA. Topologically, residues 108–145 are periplasmic; the sequence is LREWMAEIGKRSSVAVSWIGKVKTTAQMMALFALLWRP. Residues 146-168 form a helical membrane-spanning segment; the sequence is ERIVEGIGVAALYIAAVLTFWSM. Topologically, residues 169–181 are cytoplasmic; it reads FQYLNAARHDLLE.

Belongs to the CDP-alcohol phosphatidyltransferase class-I family.

The protein resides in the cell inner membrane. It catalyses the reaction a CDP-1,2-diacyl-sn-glycerol + sn-glycerol 3-phosphate = a 1,2-diacyl-sn-glycero-3-phospho-(1'-sn-glycero-3'-phosphate) + CMP + H(+). It participates in phospholipid metabolism; phosphatidylglycerol biosynthesis; phosphatidylglycerol from CDP-diacylglycerol: step 1/2. Catalyzes the conversion of cytidine diphosphate diacylglycerol (CDP-DG) and glycerol 3-phosphate into phosphatidylglycerol. Essential for the synthesis of anionic phospholipids, thereby playing a role in balancing the ratio of zwitterionic and anionic phospholipids, which is thought to be important for normal membrane function. This chain is CDP-diacylglycerol--glycerol-3-phosphate 3-phosphatidyltransferase, found in Pectobacterium atrosepticum (strain SCRI 1043 / ATCC BAA-672) (Erwinia carotovora subsp. atroseptica).